The sequence spans 664 residues: DNA topoisomerase 4 subunit B (664 aa).

ATP contacts are provided by residues Y7, N47, D74, 114 to 120 (GLHGVGA), and K341. The disordered stretch occupies residues 386 to 418 (REAARKAREDARSGKKNKRKDTLLSGKLTPAQS). A compositionally biased stretch (basic and acidic residues) spans 387 to 398 (EAARKAREDARS). The 115-residue stretch at 424–538 (NELYLVEGDS…AGRVFIALPP (115 aa)) folds into the Toprim domain. Residues E430, D503, and D505 each contribute to the Mg(2+) site.

It belongs to the type II topoisomerase family. ParE type 2 subfamily. In terms of assembly, heterotetramer composed of ParC and ParE. The cofactor is Mg(2+). It depends on Mn(2+) as a cofactor. Requires Ca(2+) as cofactor.

It carries out the reaction ATP-dependent breakage, passage and rejoining of double-stranded DNA.. Its function is as follows. Topoisomerase IV is essential for chromosome segregation. It relaxes supercoiled DNA. Performs the decatenation events required during the replication of a circular DNA molecule. The sequence is that of DNA topoisomerase 4 subunit B from Staphylococcus epidermidis (strain ATCC 35984 / DSM 28319 / BCRC 17069 / CCUG 31568 / BM 3577 / RP62A).